We begin with the raw amino-acid sequence, 321 residues long: Phosphate acyltransferase (321 aa).

The protein belongs to the PlsX family. Homodimer. Probably interacts with PlsY.

It localises to the cytoplasm. The catalysed reaction is a fatty acyl-[ACP] + phosphate = an acyl phosphate + holo-[ACP]. It functions in the pathway lipid metabolism; phospholipid metabolism. Catalyzes the reversible formation of acyl-phosphate (acyl-PO(4)) from acyl-[acyl-carrier-protein] (acyl-ACP). This enzyme utilizes acyl-ACP as fatty acyl donor, but not acyl-CoA. The chain is Phosphate acyltransferase from Chlamydia trachomatis serovar A (strain ATCC VR-571B / DSM 19440 / HAR-13).